Reading from the N-terminus, the 244-residue chain is Protein-L-isoaspartate O-methyltransferase 2 (244 aa).

The active site involves S88.

Belongs to the methyltransferase superfamily. L-isoaspartyl/D-aspartyl protein methyltransferase family.

It is found in the cytoplasm. It carries out the reaction [protein]-L-isoaspartate + S-adenosyl-L-methionine = [protein]-L-isoaspartate alpha-methyl ester + S-adenosyl-L-homocysteine. Functionally, catalyzes the methyl esterification of L-isoaspartyl residues in peptides and proteins that result from spontaneous decomposition of normal L-aspartyl and L-asparaginyl residues. It plays a role in the repair and/or degradation of damaged proteins. This is Protein-L-isoaspartate O-methyltransferase 2 from Shewanella sediminis (strain HAW-EB3).